Reading from the N-terminus, the 364-residue chain is Probable dual-specificity RNA methyltransferase RlmN (364 aa).

The active-site Proton acceptor is E107. The 234-residue stretch at 113 to 346 (HNYGNSVCVT…VTIRREHGHD (234 aa)) folds into the Radical SAM core domain. A disulfide bridge links C120 with C351. [4Fe-4S] cluster-binding residues include C127, C131, and C134. S-adenosyl-L-methionine is bound by residues 177-178 (GE), S209, 232-234 (SLH), and N308. C351 (S-methylcysteine intermediate) is an active-site residue.

Belongs to the radical SAM superfamily. RlmN family. [4Fe-4S] cluster is required as a cofactor.

The protein resides in the cytoplasm. It catalyses the reaction adenosine(2503) in 23S rRNA + 2 reduced [2Fe-2S]-[ferredoxin] + 2 S-adenosyl-L-methionine = 2-methyladenosine(2503) in 23S rRNA + 5'-deoxyadenosine + L-methionine + 2 oxidized [2Fe-2S]-[ferredoxin] + S-adenosyl-L-homocysteine. The catalysed reaction is adenosine(37) in tRNA + 2 reduced [2Fe-2S]-[ferredoxin] + 2 S-adenosyl-L-methionine = 2-methyladenosine(37) in tRNA + 5'-deoxyadenosine + L-methionine + 2 oxidized [2Fe-2S]-[ferredoxin] + S-adenosyl-L-homocysteine. Specifically methylates position 2 of adenine 2503 in 23S rRNA and position 2 of adenine 37 in tRNAs. In Geobacillus thermodenitrificans (strain NG80-2), this protein is Probable dual-specificity RNA methyltransferase RlmN.